Consider the following 152-residue polypeptide: MSMKNKLKNFFSMDEEEYEYEYIETEQDHPEEHEQQKDKQPAYAQKPQGKQNVVSLQSVQKSSKVVLSEPRVYAEAQEIADHLKNRRAVVVNLQRIQHDQAKRIVDFLSGTVYAIGGDIQRIGSDIFLCTPDNVDVSGTISELINEDEHQRW.

The tract at residues 21–56 (EYIETEQDHPEEHEQQKDKQPAYAQKPQGKQNVVSL) is disordered. The segment covering 26 to 40 (EQDHPEEHEQQKDKQ) has biased composition (basic and acidic residues).

The protein belongs to the SepF family. Homodimer. Interacts with FtsZ.

It localises to the cytoplasm. Cell division protein that is part of the divisome complex and is recruited early to the Z-ring. Probably stimulates Z-ring formation, perhaps through the cross-linking of FtsZ protofilaments. Its function overlaps with FtsA. This Bacillus velezensis (strain DSM 23117 / BGSC 10A6 / LMG 26770 / FZB42) (Bacillus amyloliquefaciens subsp. plantarum) protein is Cell division protein SepF.